A 434-amino-acid polypeptide reads, in one-letter code: Putative MgpC-like protein MPN_149 (434 aa).

2 disordered regions span residues Gly-168 to Val-193 and Glu-215 to Gly-267. Polar residues predominate over residues Gly-170–Leu-184. A compositionally biased stretch (basic and acidic residues) spans Asp-218–Ser-229. The segment covering Ser-248–Gly-267 has biased composition (polar residues).

It belongs to the MgpC family.

This is Putative MgpC-like protein MPN_149 from Mycoplasma pneumoniae (strain ATCC 29342 / M129 / Subtype 1) (Mycoplasmoides pneumoniae).